The sequence spans 78 residues: Probable [Fe-S]-dependent transcriptional repressor (78 aa).

C56, C61, C64, and C70 together coordinate iron-sulfur cluster.

Belongs to the FeoC family.

May function as a transcriptional regulator that controls feoABC expression. The sequence is that of Probable [Fe-S]-dependent transcriptional repressor from Escherichia coli O17:K52:H18 (strain UMN026 / ExPEC).